The primary structure comprises 88 residues: Small ribosomal subunit protein bS20 (88 aa).

A disordered region spans residues 1–27 (MANSKSAKKRALQSEKRRQHNASRRSM).

Belongs to the bacterial ribosomal protein bS20 family.

Binds directly to 16S ribosomal RNA. This is Small ribosomal subunit protein bS20 from Shewanella woodyi (strain ATCC 51908 / MS32).